The sequence spans 363 residues: MEALVVDAGSKFLKAGAAIPDQSPAMIIPSQMKRMVDDGSSSADNPTTVFEDVTLDPIERGLIRDWDAMEDLLRYVVYTGLGWEEGNEGNILFTDPLCTPKAIREQLVQLMFETFNVSGFYASEQAVLSLYAVGRISGCTVDIGHGKIDIAPVLEGAVQHIASKRFELGGTELTKLFAQELGKTNPSMNLSMSDVEKLKEQYANCAEDEIAYKKTQNCEIEQHTLPDGQVISIGRERYSVGEALFQPSILGLEEHGIVEQLVRIISTVSSENHRQLLENTVLCGGTTSMTGFESRFQKEANLCSSAIRPTLVKPPEYMPENLGMYSAWVGGAILAKVVFPQNQHVTKADYDETGPSVVHRKCF.

An N-acetylmethionine modification is found at Met1.

Belongs to the actin family. Plant ARP7 subfamily. In terms of tissue distribution, mostly expressed in flowers, and, to a lower extent, in roots, seedlings, leaves and siliques (at protein level).

The protein localises to the nucleus. The protein resides in the cytoplasm. Its function is as follows. Essential protein required during embryogenesis and all plant development stages, probably through a chromatin-mediated regulation of gene expression. The chain is Actin-related protein 7 (ARP7) from Arabidopsis thaliana (Mouse-ear cress).